Here is a 152-residue protein sequence, read N- to C-terminus: SsrA-binding protein (152 aa).

This sequence belongs to the SmpB family.

It localises to the cytoplasm. Functionally, required for rescue of stalled ribosomes mediated by trans-translation. Binds to transfer-messenger RNA (tmRNA), required for stable association of tmRNA with ribosomes. tmRNA and SmpB together mimic tRNA shape, replacing the anticodon stem-loop with SmpB. tmRNA is encoded by the ssrA gene; the 2 termini fold to resemble tRNA(Ala) and it encodes a 'tag peptide', a short internal open reading frame. During trans-translation Ala-aminoacylated tmRNA acts like a tRNA, entering the A-site of stalled ribosomes, displacing the stalled mRNA. The ribosome then switches to translate the ORF on the tmRNA; the nascent peptide is terminated with the 'tag peptide' encoded by the tmRNA and targeted for degradation. The ribosome is freed to recommence translation, which seems to be the essential function of trans-translation. This is SsrA-binding protein from Persephonella marina (strain DSM 14350 / EX-H1).